The following is a 428-amino-acid chain: MEILMASSNLIKQLQERGLVAQVTDEDALAERLAQGPIALYCGFDPTADSLHLGHLVPLLCLKRFQQAGHKPVALVGGATGLIGDPSFKAAERKLNTEETVQEWVAKIRKQVAPFLDFDCGENSAIAANNYDWFGSMNVLTFLRDIGKHFSVNQMINKEAVKQRLNRDDQGISFTEFSYNLLQGYDFACLNKLHGVALQIGGSDQWGNITSGIDLTRRLHQNQVFGLTVPLITKADGTKFGKTEGGAVWLDPKKTSPYKFYQFWINTADADVYRFLKFFTFMDIEEINALEEEDKNSGKAPRAQYVLAEQVTRLVHGEEGLVAAKRITECLFSGSLSALSEADFEQLAQDGVPMVEMEKGADLMQALVDAELQPSRGQARKTIASNAVTINGEKQSDPEYIFNDEDRLFGRYTLLRRGKKNYCLICWK.

Tyrosine 41 is an L-tyrosine binding site. Residues 46 to 55 carry the 'HIGH' region motif; the sequence is PTADSLHLGH. The L-tyrosine site is built by tyrosine 179 and glutamine 183. The 'KMSKS' region motif lies at 239 to 243; the sequence is KFGKT. Residue lysine 242 coordinates ATP. Residues 361-418 enclose the S4 RNA-binding domain; sequence ADLMQALVDAELQPSRGQARKTIASNAVTINGEKQSDPEYIFNDEDRLFGRYTLLRRG.

This sequence belongs to the class-I aminoacyl-tRNA synthetase family. TyrS type 1 subfamily. As to quaternary structure, homodimer.

It localises to the cytoplasm. It carries out the reaction tRNA(Tyr) + L-tyrosine + ATP = L-tyrosyl-tRNA(Tyr) + AMP + diphosphate + H(+). In terms of biological role, catalyzes the attachment of tyrosine to tRNA(Tyr) in a two-step reaction: tyrosine is first activated by ATP to form Tyr-AMP and then transferred to the acceptor end of tRNA(Tyr). The sequence is that of Tyrosine--tRNA ligase from Salmonella paratyphi C (strain RKS4594).